Here is a 548-residue protein sequence, read N- to C-terminus: Fumarate hydratase class I, aerobic (548 aa).

Positions 105, 224, and 318 each coordinate [4Fe-4S] cluster.

It belongs to the class-I fumarase family. As to quaternary structure, homodimer. [4Fe-4S] cluster serves as cofactor.

It carries out the reaction (S)-malate = fumarate + H2O. The catalysed reaction is oxaloacetate = enol-oxaloacetate. It participates in carbohydrate metabolism; tricarboxylic acid cycle; (S)-malate from fumarate: step 1/1. Functionally, catalyzes the reversible hydration of fumarate to (S)-malate. Functions as an aerobic enzyme in the direction of malate formation as part of the citric acid cycle. Accounts for about 80% of the fumarase activity when the bacteria grow aerobically. To a lesser extent, also displays D-tartrate dehydratase activity in vitro, but is not able to convert (R)-malate, L-tartrate or meso-tartrate. Can also catalyze the isomerization of enol- to keto-oxaloacetate. This chain is Fumarate hydratase class I, aerobic, found in Escherichia coli O6:H1 (strain CFT073 / ATCC 700928 / UPEC).